Here is a 124-residue protein sequence, read N- to C-terminus: Small ribosomal subunit protein uS12 (124 aa).

A disordered region spans residues 1-24 (MTTINQLVRKPRQATTYKSASPAL). Aspartate 89 is subject to 3-methylthioaspartic acid.

This sequence belongs to the universal ribosomal protein uS12 family. In terms of assembly, part of the 30S ribosomal subunit. Contacts proteins S8 and S17. May interact with IF1 in the 30S initiation complex.

With S4 and S5 plays an important role in translational accuracy. In terms of biological role, interacts with and stabilizes bases of the 16S rRNA that are involved in tRNA selection in the A site and with the mRNA backbone. Located at the interface of the 30S and 50S subunits, it traverses the body of the 30S subunit contacting proteins on the other side and probably holding the rRNA structure together. The combined cluster of proteins S8, S12 and S17 appears to hold together the shoulder and platform of the 30S subunit. The sequence is that of Small ribosomal subunit protein uS12 from Xanthomonas axonopodis pv. citri (strain 306).